Here is a 301-residue protein sequence, read N- to C-terminus: General transcription and DNA repair factor IIH subunit TFB4 (301 aa).

The C4-type zinc finger occupies Cys259–Cys276.

This sequence belongs to the TFB4 family. Component of the 7-subunit TFIIH core complex composed of XPB, XPD, TFB1/GTF2H1, GTF2H2/P44, TFB4/GTF2H3, TFB2/GTF2H4 and TFB5/GTF2H5, which is active in NER. The core complex associates with the 3-subunit CDK-activating kinase (CAK) module composed of CYCH1/cyclin H1, CDKD and MAT1/At4g30820 to form the 10-subunit holoenzyme (holo-TFIIH) active in transcription.

It localises to the nucleus. Component of the general transcription and DNA repair factor IIH (TFIIH) core complex, which is involved in general and transcription-coupled nucleotide excision repair (NER) of damaged DNA and, when complexed to CAK, in RNA transcription by RNA polymerase II. In NER, TFIIH acts by opening DNA around the lesion to allow the excision of the damaged oligonucleotide and its replacement by a new DNA fragment. In transcription, TFIIH has an essential role in transcription initiation. When the pre-initiation complex (PIC) has been established, TFIIH is required for promoter opening and promoter escape. Phosphorylation of the C-terminal tail (CTD) of the largest subunit of RNA polymerase II by the kinase module CAK controls the initiation of transcription. This is General transcription and DNA repair factor IIH subunit TFB4 from Arabidopsis thaliana (Mouse-ear cress).